The primary structure comprises 302 residues: Serine/threonine-protein phosphatase alpha-3 isoform (302 aa).

4 residues coordinate Mn(2+): Asp-62, His-64, Asp-90, and Asn-122. The Proton donor role is filled by His-123. His-171 and His-246 together coordinate Mn(2+).

It belongs to the PPP phosphatase family. PP-1 subfamily. As to quaternary structure, interacts with Nop17l. Mn(2+) serves as cofactor.

The catalysed reaction is O-phospho-L-seryl-[protein] + H2O = L-seryl-[protein] + phosphate. It catalyses the reaction O-phospho-L-threonyl-[protein] + H2O = L-threonyl-[protein] + phosphate. This chain is Serine/threonine-protein phosphatase alpha-3 isoform (Pp1-13C), found in Drosophila melanogaster (Fruit fly).